A 1893-amino-acid polypeptide reads, in one-letter code: Serine-aspartate repeat-containing protein I (1893 aa).

A signal peptide spans 1–54; that stretch reads MNFKGVKLLKNSKKRLDFLPNTLNKYSIRKFTVGTASILVGATLFLGVSNEAEA. The interval 53–333 is disordered; the sequence is EAAEKIDSPT…AHGINNKNKQ (281 aa). Positions 54–222 are enriched in basic and acidic residues; it reads AAEKIDSPTK…AEEPATKEEA (169 aa). A run of 21 repeats spans residues 72-83, 84-95, 96-107, 108-119, 120-131, 132-143, 144-155, 156-167, 168-179, 180-191, 192-203, 204-215, 216-227, 228-239, 240-251, 252-263, 264-275, 276-287, 288-299, 300-311, and 312-323. The segment at 72-323 is 21 X 12 AA tandem repeat of [AP]-[AE]-T-K-E-[EK]-A-[AV]-[IT]-[AST]-E-E; that stretch reads AATKEEAATT…TKEKAVTSEE (252 aa). The span at 240–284 shows a compositional bias: basic and acidic residues; that stretch reads PATKEEAAIAEEAATKEKAVTSEEAATKEKAAIAEEAATKEKAAI. The segment covering 286–302 has biased composition (acidic residues); that stretch reads EEPETKEEAATTEEPET. Residues 312-325 are compositionally biased toward basic and acidic residues; it reads PATKEKAVTSEEAH. A ligand binding A region region spans residues 324–755; it reads AHGINNKNKQ…GSSTAQGDNP (432 aa). CNA-B domains lie at 756-874 and 875-984; these read TYNL…YETP and KYSL…YFDE. The segment at 941 to 1867 is disordered; sequence KPEGLTQTTT…GNNTQNNGTL (927 aa). The segment covering 955 to 975 has biased composition (basic and acidic residues); sequence DENKDADGEEVHVTITDHDDF. The segment covering 981 to 1836 has biased composition (acidic residues); the sequence is YFDEDSDADA…DSDADADADS (856 aa). Residues 1837 to 1851 show a composition bias toward basic and acidic residues; it reads DADKYHNDTADKSND. The LPXTG sorting signal signature appears at 1854-1858; the sequence is LPDTG. Position 1857 is a pentaglycyl murein peptidoglycan amidated threonine (threonine 1857). Positions 1858-1893 are cleaved as a propeptide — removed by sortase; sequence GNNTQNNGTLFGSLFAALGGLFLVGSRRKNKNNEEK.

This sequence belongs to the serine-aspartate repeat-containing protein (SDr) family.

It localises to the secreted. Its subcellular location is the cell wall. Responsible for collagen binding by S.saprophyticus. This Staphylococcus saprophyticus protein is Serine-aspartate repeat-containing protein I (sdrI).